Reading from the N-terminus, the 172-residue chain is Stellate protein CG33247 (172 aa).

It belongs to the casein kinase 2 subunit beta family. Interacts in vitro with the casein kinase 2 alpha subunit (CkII-alpha). The relevance of such interaction is however unclear in vivo. As to expression, probably not expressed in wild-type flies. In males lacking the Y chromosome, it is testis-specific and constitutes the main component of star-shaped crystals.

Unknown. In males lacking the Y chromosome, its strong overexpression leads to the appearance of proteinaceous star-shaped crystals in the primary spermatocytes causing meiotic drive, possibly by interfering with normal casein kinase 2 activity. The polypeptide is Stellate protein CG33247 (Ste:CG33247) (Drosophila melanogaster (Fruit fly)).